We begin with the raw amino-acid sequence, 467 residues long: A-type ATP synthase subunit B (467 aa).

The tract at residues 95-114 (GKGQPRDHMPLPPPEDFRDV) is disordered.

This sequence belongs to the ATPase alpha/beta chains family. Has multiple subunits with at least A(3), B(3), C, D, E, F, H, I and proteolipid K(x).

The protein localises to the cell membrane. Functionally, component of the A-type ATP synthase that produces ATP from ADP in the presence of a proton gradient across the membrane. The B chain is a regulatory subunit. This chain is A-type ATP synthase subunit B, found in Pyrobaculum aerophilum (strain ATCC 51768 / DSM 7523 / JCM 9630 / CIP 104966 / NBRC 100827 / IM2).